Here is a 340-residue protein sequence, read N- to C-terminus: Glycerol-3-phosphate dehydrogenase [NAD(P)+] (340 aa).

Ser-14, Phe-15, Arg-35, and Lys-108 together coordinate NADPH. Sn-glycerol 3-phosphate contacts are provided by Lys-108 and Gly-136. Residue Ala-140 coordinates NADPH. The sn-glycerol 3-phosphate site is built by Lys-191, Asp-244, Ser-254, Arg-255, and Asn-256. Lys-191 acts as the Proton acceptor in catalysis. An NADPH-binding site is contributed by Arg-255. Position 281 (Glu-281) interacts with NADPH.

Belongs to the NAD-dependent glycerol-3-phosphate dehydrogenase family.

The protein resides in the cytoplasm. The catalysed reaction is sn-glycerol 3-phosphate + NAD(+) = dihydroxyacetone phosphate + NADH + H(+). It carries out the reaction sn-glycerol 3-phosphate + NADP(+) = dihydroxyacetone phosphate + NADPH + H(+). The protein operates within membrane lipid metabolism; glycerophospholipid metabolism. Catalyzes the reduction of the glycolytic intermediate dihydroxyacetone phosphate (DHAP) to sn-glycerol 3-phosphate (G3P), the key precursor for phospholipid synthesis. The protein is Glycerol-3-phosphate dehydrogenase [NAD(P)+] of Pseudomonas aeruginosa (strain ATCC 15692 / DSM 22644 / CIP 104116 / JCM 14847 / LMG 12228 / 1C / PRS 101 / PAO1).